The sequence spans 818 residues: LPS-assembly protein LptD (818 aa).

An N-terminal signal peptide occupies residues 1–33 (MVNETMKHQFKFNPLATAIFTLLCSGSIQSSYA).

It belongs to the LptD family. In terms of assembly, component of the lipopolysaccharide transport and assembly complex. Interacts with LptE and LptA.

Its subcellular location is the cell outer membrane. In terms of biological role, together with LptE, is involved in the assembly of lipopolysaccharide (LPS) at the surface of the outer membrane. The sequence is that of LPS-assembly protein LptD from Acinetobacter baumannii (strain ATCC 19606 / DSM 30007 / JCM 6841 / CCUG 19606 / CIP 70.34 / NBRC 109757 / NCIMB 12457 / NCTC 12156 / 81).